A 2571-amino-acid polypeptide reads, in one-letter code: Stabilin-1 (2571 aa).

Positions 1 to 25 (MAEPRTLLLLCVLVLCLSDSSFIRG) are cleaved as a signal peptide. The Extracellular portion of the chain corresponds to 26–2475 (QTVRSKRCDI…RAVLGSEPPP (2450 aa)). EGF-like domains are found at residues 111-149 (FECP…SVCQ), 157-194 (FGPD…PHCD), 196-232 (ELPV…NVCL), and 233-272 (APDP…KVCL). Disulfide bonds link C113–C127, C121–C137, C139–C148, C161–C172, C165–C182, C184–C193, C200–C211, C205–C218, C220–C231, C237–C248, C242–C258, and C260–C271. Residues N134 and N142 are each glycosylated (N-linked (GlcNAc...) asparagine). N-linked (GlcNAc...) asparagine glycosylation is found at N287, N313, N416, N607, N674, N713, and N746. FAS1 domains lie at 357-495 (YGHL…TALR) and 507-642 (KKTV…EGIL). In terms of domain architecture, EGF-like 5 spans 729–769 (DCTQCPGGFSNPCYGKGNCSDGVRGNGACLCFPDYKGIACH). Disulfide bonds link C733–C747, C741–C757, and C759–C768. N-linked (GlcNAc...) asparagine glycosylation is present at N817. EGF-like domains are found at residues 819–859 (SMGN…NGFS), 862–904 (RSNP…RICV), 905–947 (AIDE…YECS), and 948–987 (PIDP…DGFS). 10 cysteine pairs are disulfide-bonded: C823–C838, C832–C847, C866–C880, C874–C890, C892–C903, C909–C923, C917–C933, C935–C946, C952–C965, and C959–C975. FAS1 domains follow at residues 989-1119 (YGDI…SQVL) and 1129-1254 (GPGL…SGIL). 7 N-linked (GlcNAc...) asparagine glycosylation sites follow: N1011, N1088, N1097, N1171, N1179, N1223, and N1275. The 66-residue stretch at 1328 to 1393 (TLCEPCPGGL…CDCDHGLCQE (66 aa)) folds into the Laminin EGF-like 1 domain. Disulfide bonds link C1333-C1347, C1341-C1357, C1359-C1368, C1380-C1391, C1384-C1401, C1403-C1412, C1421-C1431, C1425-C1441, C1443-C1454, C1460-C1473, C1467-C1483, C1485-C1496, C1502-C1515, C1509-C1525, C1527-C1539, C1545-C1558, C1552-C1568, and C1570-C1582. The N-linked (GlcNAc...) asparagine glycan is linked to N1398. EGF-like domains follow at residues 1417–1455 (TDHQ…SYCS), 1456–1497 (EVDP…ELCQ), 1498–1540 (EINS…QTCK), and 1541–1583 (LLDP…ITCH). N1450 and N1472 each carry an N-linked (GlcNAc...) asparagine glycan. 2 consecutive FAS1 domains span residues 1583-1709 (HGRV…DHVL) and 1725-1865 (PQRN…DQLL). N-linked (GlcNAc...) asparagine glycosylation is found at N1627 and N1728. The Laminin EGF-like 2 domain occupies 1966–2031 (INCHACPGGP…RCTQHGRCDE (66 aa)). Intrachain disulfides connect C1971/C1985, C1979/C1995, C1997/C2006, C2018/C2029, C2023/C2039, C2041/C2050, C2060/C2070, C2064/C2076, C2078/C2089, C2095/C2108, C2102/C2117, C2119/C2130, C2136/C2150, C2144/C2160, C2162/C2173, C2230/C2299, and C2254/C2275. EGF-like domains are found at residues 2056–2090 (LQPV…RVCT), 2091–2131 (VADL…WSCR), and 2132–2174 (ARDP…LQCL). N2107 carries N-linked (GlcNAc...) asparagine glycosylation. Residues 2208–2301 (GVFHIQATSG…SELWDAYCYR (94 aa)) enclose the Link domain. 8 N-linked (GlcNAc...) asparagine glycosylation sites follow: N2261, N2290, N2334, N2347, N2379, N2393, N2400, and N2424. Residues 2322–2459 (NGKLLDVLAA…GIIHALASPL (138 aa)) enclose the FAS1 7 domain. Residues 2476–2496 (VALSLGVVVTSGTLLGLVAGA) form a helical membrane-spanning segment. Over 2497-2571 (LYLRARGKPP…PDTQRVLKVK (75 aa)) the chain is Cytoplasmic.

As to quaternary structure, interacts with CHID1.

It is found in the membrane. Acts as a scavenger receptor for acetylated low density lipoprotein. Binds to both Gram-positive and Gram-negative bacteria and may play a role in defense against bacterial infection. When inhibited in endothelial tube formation assays, there is a marked decrease in cell-cell interactions, suggesting a role in angiogenesis. Involved in the delivery of newly synthesized CHID1/SI-CLP from the biosynthetic compartment to the endosomal/lysosomal system. This is Stabilin-1 (Stab1) from Mus musculus (Mouse).